Reading from the N-terminus, the 846-residue chain is Translation initiation factor IF-2 (846 aa).

A disordered region spans residues 94-263 (QRSPEEIQAE…HGFQNPTGPV (170 aa)). The span at 96 to 135 (SPEEIQAEQKRELEERRAAENAARDKVEAEVRQRNEEQAR) shows a compositional bias: basic and acidic residues. Composition is skewed to low complexity over residues 136 to 148 (RQAA…APAP) and 158 to 176 (AAPV…ASED). 2 stretches are compositionally biased toward basic and acidic residues: residues 177-206 (AAAR…RGEA) and 230-239 (TTDEESDGAR). The segment covering 240-253 (RGRGGKSKLKKRNQ) has biased composition (basic residues). Residues 346–513 (SRAPVVTVMG…AVLLQAEILE (168 aa)) enclose the tr-type G domain. Residues 355-362 (GHVDHGKT) form a G1 region. 355–362 (GHVDHGKT) is a binding site for GTP. Positions 380-384 (GITQH) are G2. The interval 401-404 (DTPG) is G3. GTP is bound by residues 401–405 (DTPGH) and 455–458 (NKID). Residues 455 to 458 (NKID) form a G4 region. Positions 491–493 (SAK) are G5.

The protein belongs to the TRAFAC class translation factor GTPase superfamily. Classic translation factor GTPase family. IF-2 subfamily.

The protein localises to the cytoplasm. Its function is as follows. One of the essential components for the initiation of protein synthesis. Protects formylmethionyl-tRNA from spontaneous hydrolysis and promotes its binding to the 30S ribosomal subunits. Also involved in the hydrolysis of GTP during the formation of the 70S ribosomal complex. The chain is Translation initiation factor IF-2 from Pseudomonas putida (strain ATCC 700007 / DSM 6899 / JCM 31910 / BCRC 17059 / LMG 24140 / F1).